The primary structure comprises 657 residues: Probable Xaa-Pro aminopeptidase P (657 aa).

Positions 453, 464, 562, and 576 each coordinate Mn(2+).

This sequence belongs to the peptidase M24B family. Mn(2+) serves as cofactor.

The catalysed reaction is Release of any N-terminal amino acid, including proline, that is linked to proline, even from a dipeptide or tripeptide.. In terms of biological role, catalyzes the removal of a penultimate prolyl residue from the N-termini of peptides. This chain is Probable Xaa-Pro aminopeptidase P (ampp), found in Talaromyces stipitatus (strain ATCC 10500 / CBS 375.48 / QM 6759 / NRRL 1006) (Penicillium stipitatum).